Reading from the N-terminus, the 49-residue chain is uncharacterized protein (49 aa).

The interval 1–49 (MSNETFEQNEPKPTKVEELQPGDVEAVEDSTPVREITQTDHINKAMLQI) is disordered. A compositionally biased stretch (basic and acidic residues) spans 9 to 18 (NEPKPTKVEE).

This is an uncharacterized protein from Dictyostelium discoideum (Social amoeba).